Consider the following 301-residue polypeptide: Probable alpha-L-glutamate ligase 2 (301 aa).

Residues 104-287 (MQLLSRKGIG…VASMIIEFIV (184 aa)) form the ATP-grasp domain. ATP-binding positions include lysine 141, 178 to 179 (EY), aspartate 187, and 211 to 213 (RSN). Positions 248, 260, and 262 each coordinate Mg(2+). 3 residues coordinate Mn(2+): aspartate 248, glutamate 260, and asparagine 262.

It belongs to the RimK family. It depends on Mg(2+) as a cofactor. The cofactor is Mn(2+).

This Pseudoalteromonas atlantica (strain T6c / ATCC BAA-1087) protein is Probable alpha-L-glutamate ligase 2.